We begin with the raw amino-acid sequence, 312 residues long: Malate dehydrogenase (312 aa).

NAD(+) is bound by residues 7 to 13 and D34; that span reads GAAGGIG. Positions 81 and 87 each coordinate substrate. Residues N94 and 117-119 contribute to the NAD(+) site; that span reads ITN. The substrate site is built by N119 and R153. The Proton acceptor role is filled by H177. M227 contributes to the NAD(+) binding site.

It belongs to the LDH/MDH superfamily. MDH type 1 family. Homodimer.

The enzyme catalyses (S)-malate + NAD(+) = oxaloacetate + NADH + H(+). Functionally, catalyzes the reversible oxidation of malate to oxaloacetate. The chain is Malate dehydrogenase from Salmonella choleraesuis (strain SC-B67).